A 148-amino-acid polypeptide reads, in one-letter code: Transcription antitermination protein NusB (148 aa).

It belongs to the NusB family.

Its function is as follows. Involved in transcription antitermination. Required for transcription of ribosomal RNA (rRNA) genes. Binds specifically to the boxA antiterminator sequence of the ribosomal RNA (rrn) operons. The sequence is that of Transcription antitermination protein NusB from Desulfitobacterium hafniense (strain DSM 10664 / DCB-2).